The sequence spans 243 residues: Aquaporin SIP1-2 (243 aa).

2 helical membrane passes run 9 to 29 and 45 to 65; these read AAAADAVVTFLWVLCVSTLGA and FALLVTVSLLSVLLFVFNILC. The NPA 1 motif lies at 74–76; it reads NPT. A run of 3 helical transmembrane segments spans residues 98–118, 136–156, and 163–183; these read LPAQAAGAVGGALAISELMPA, GAGAELVLTFVITLAVLLIIV, and IIKTWMISICTLCLVLSGAAY. Positions 189–191 match the NPA 2 motif; it reads NPA. Residues 211–231 form a helical membrane-spanning segment; sequence VYWICPFIGAILAAWIFRAMF.

Belongs to the MIP/aquaporin (TC 1.A.8) family. SIP (TC 1.A.8.10) subfamily.

It is found in the membrane. Aquaporins facilitate the transport of water and small neutral solutes across cell membranes. The protein is Aquaporin SIP1-2 (SIP1-2) of Zea mays (Maize).